A 207-amino-acid polypeptide reads, in one-letter code: MANIDLKAEKGQEQLNELLANKSYLQGYEPSQEDVAAFNQLNKAPSDKFPYLLRWYKHISSFSDAEKKGFPGIPTSASKEEDDDVDLFGSDEEDEEAEKIKAERMKAYSDKKSKKPAIVAKSSVILDIKPWDDETDMAEMEKLVRSVQMDGLVWGAAKLIPLAYGIKKLSIMCVVEDDKVSIDELQEKISEFEDFVQSVDIAAFNKV.

At Ala2 the chain carries N-acetylalanine. The segment at 70 to 96 (FPGIPTSASKEEDDDVDLFGSDEEDEE) is disordered. Residues 80-96 (EEDDDVDLFGSDEEDEE) show a composition bias toward acidic residues. The residue at position 90 (Ser90) is a Phosphoserine; by CK2.

It belongs to the EF-1-beta/EF-1-delta family. EF-1 is composed of 4 subunits: alpha, beta, delta, and gamma. Post-translationally, phosphorylation affects the GDP/GTP exchange rate.

Functionally, EF-1-beta and EF-1-delta stimulate the exchange of GDP bound to EF-1-alpha to GTP. The protein is Elongation factor 1-beta of Artemia salina (Brine shrimp).